The following is a 2446-amino-acid chain: Transcription factor HIVEP2 (2446 aa).

A disordered region spans residues 1–93 (MDTGDTALGQ…YPPHRPSPYS (93 aa)). Residues 17 to 28 (GETDKASGRWRQ) are compositionally biased toward basic and acidic residues. C2H2-type zinc fingers lie at residues 189–211 (YICPYCSRACAKPSVLKKHIRSH) and 217–239 (YPCIPCGFSFKTKSNLYKHRKSH). Disordered regions lie at residues 272–303 (HSDGEQSTDTDEESSLFAEASDKMSPGPPIPL), 340–416 (ESSQ…PPNT), 543–563 (SNSVPTSSATNLTIPPSLRGS), and 751–985 (SHGH…SFER). Composition is skewed to polar residues over residues 381–416 (SEPSLNLLSPHSKGSTDSGYFSRSESAEQQISPPNT) and 543–556 (SNSVPTSSATNLTI). The span at 751-760 (SHGHTERFDP) shows a compositional bias: basic and acidic residues. Over residues 766 to 777 (QPGSPSLVSEES) the composition is skewed to polar residues. The span at 782–791 (DSDKMSDLGG) shows a compositional bias: basic and acidic residues. Positions 800–812 (SVIQHTNSLSRPN) are enriched in polar residues. A Phosphoserine modification is found at Ser819. The span at 863–878 (PSPSQQVQQQSYHTQP) shows a compositional bias: low complexity. Positions 892–916 (RVTEEPDKPEKEKEAQSKEPEKPVE) are enriched in basic and acidic residues. The short motif at 937 to 943 (PKKKRLR) is the Nuclear localization signal element. Phosphoserine occurs at positions 950, 955, 1048, 1443, and 1447. A compositionally biased stretch (low complexity) spans 952–982 (GESSFESTGTGLSRSPSQESNLSHSSSFSMS). Positions 1485–1603 (KDLSRPQKPQ…LEEEGKGHKR (119 aa)) are disordered. Composition is skewed to low complexity over residues 1510–1533 (SGSSSFSSLSPSSSQDYPSVSPSS) and 1576–1586 (SDMSMSPQSSS). 2 C2H2-type zinc fingers span residues 1799 to 1821 (YICEECGIRCKKPSMLKKHIRTH) and 1827 to 1851 (YVCKLCNFAFKTKGNLTKHMKSKAH). 2 disordered regions span residues 1882 to 1951 (AAEK…VNVG) and 2024 to 2129 (EECM…RRDL). A compositionally biased stretch (acidic residues) spans 1899–1925 (DAEESDGEDGDDNDDDDEDEDDFDDQG). Low complexity predominate over residues 2029-2053 (PSEPSSSPRDFSPSSHHSSPGYDSS). A run of 10 repeats spans residues 2053–2056 (SPCR), 2059–2062 (SPKR), 2071–2074 (SPRR), 2083–2086 (SPMR), 2089–2092 (SPRK), 2106–2109 (SPRR), 2112–2115 (SPRR), 2118–2121 (SPGK), 2130–2133 (SPRR), and 2145–2148 (SPRR). Residues 2053 to 2148 (SPCRDNSPKR…TTIRAPSPRR (96 aa)) are 10 X 4 AA tandem repeats of S-P-[RGMKC]-[RK]. A compositionally biased stretch (basic and acidic residues) spans 2078–2107 (PRRDLSPMRHLSPRKEAALRREMSQRDVSP). The residue at position 2118 (Ser2118) is a Phosphoserine. Disordered stretches follow at residues 2242–2325 (PALS…QEEN), 2371–2403 (HFSRPEPGQPCTSATHPDLHDGEKDNFGTSQTP), and 2423–2446 (HSSKELSSSTEESKDPSSEKSQLH). A phosphoserine mark is found at Ser2297 and Ser2301. Residues 2307–2317 (KQSTSEDSLNA) are compositionally biased toward polar residues. The span at 2387 to 2396 (PDLHDGEKDN) shows a compositional bias: basic and acidic residues. Phosphoserine occurs at positions 2429 and 2431. The span at 2433–2446 (EESKDPSSEKSQLH) shows a compositional bias: basic and acidic residues.

Interacts with TCF4. Expressed in brain and skeletal muscle.

It is found in the nucleus. Its function is as follows. This protein specifically binds to the DNA sequence 5'-GGGACTTTCC-3' which is found in the enhancer elements of numerous viral promoters such as those of SV40, CMV, or HIV1. In addition, related sequences are found in the enhancer elements of a number of cellular promoters, including those of the class I MHC, interleukin-2 receptor, somatostatin receptor II, and interferon-beta genes. It may act in T-cell activation. This chain is Transcription factor HIVEP2 (HIVEP2), found in Homo sapiens (Human).